Consider the following 160-residue polypeptide: Large ribosomal subunit protein eL21 (160 aa).

2 stretches are compositionally biased toward basic and acidic residues: residues 112–123 and 136–146; these read NDQKKKEAKEKG and REAHFVRTNGK. The tract at residues 112–146 is disordered; it reads NDQKKKEAKEKGTWVQLNGQPAPPREAHFVRTNGK.

Belongs to the eukaryotic ribosomal protein eL21 family. As to quaternary structure, component of the large ribosomal subunit.

It is found in the cytoplasm. Its subcellular location is the cytosol. It localises to the endoplasmic reticulum. Component of the large ribosomal subunit. The ribosome is a large ribonucleoprotein complex responsible for the synthesis of proteins in the cell. This chain is Large ribosomal subunit protein eL21 (Rpl21), found in Rattus norvegicus (Rat).